The following is a 285-amino-acid chain: MGGMLGFFVRQLTFMPKPLPQNVRLDGKTAIVTGANVGLGLEASKEMASHGLARVILGVRTVSKGEAAKQEILKQSPNCDVQVWPVDHESFESMVAFGERAQSLDRLDIVILCAGVKNLVFSLSKTGHEQNVQVNHLGTSLLSLLLLKPLKDTAAKTGSPSRLTIVASEVHFWTPFDERKAPSILARLDEKDSFRGMERYNTSKLLNILWMRELSSRVTGNVVINAVNPGLCASALHRTDPTPGLAYLNKIFAWTPAQGGHNLTYAATQHVDEPGAYLSEQHLEK.

3 residues coordinate NADP(+): Leu-39, Lys-64, and Asp-87. Residues Ser-168 and Tyr-200 each act as proton donor in the active site. Tyr-200, Lys-204, and Ser-234 together coordinate NADP(+). Residue Lys-204 is the Lowers pKa of active site Tyr of the active site.

The protein belongs to the short-chain dehydrogenases/reductases (SDR) family.

The protein operates within phytotoxin biosynthesis. Functionally, short chain dehydrogenase; part of the gene cluster that mediates the biosynthesis of the phytotoxin solanapyrone, a causal agent of early blight disease of potato and tomato. The prosolanapyrone synthase sol1 is a polyketide synthase that produces the octaketide desmethylprosolanapyrone I via sequential condensations of 7 malonyl-CoA units with one acetyl-CoA unit, and one methylation step. The octaketide backbone is further methylated by the sol2 O-methyltransferase to yield prosolanapyrone I. Prosolanapyrone I is hydroxylated to prosolanapyrone II by the cytochrome P450 monooxygenase sol6. The solanapyrone synthase sol5 then catalyzes the oxidation of prosolanapyrone II and the subsequent Diels Alder cycloisomerization of the product prosolanapyrone III to solanapyrones A and D. Solanapyrones A and D are then converted into solanapyrones B and E, respectively, by the sol3 dehydrogenase. In Alternaria solani, this protein is Short chain dehydrogenase sol3 (sol3).